A 258-amino-acid polypeptide reads, in one-letter code: MMNPLIIKLGGVLLDSEEALERLFSTLVNYRESHQRPLVIVHGGGCVVDELMKGLNLPVKKKNGLRVTPADQIDIITGALAGTANKTLLAWAKKHQIAAVGLFLGDGDSVKVTQLDEELGHVGLAQPGSPKLINSLLENGYLPVVSSIGVTDEGQLMNVNADQAATALAATLGADLILLSDVSGILDGKGQRIAEMTAAKAEQLIEQGIITDGMIVKVNAALDAARTLGRPVDIASWRHAEQLPALFNGMPMGTRILA.

Substrate-binding positions include 44 to 45 (GG), arginine 66, and asparagine 158. ATP is bound by residues 181–186 (DVSGIL) and 209–211 (IIT).

It belongs to the acetylglutamate kinase family. ArgB subfamily. Homodimer.

It localises to the cytoplasm. The enzyme catalyses N-acetyl-L-glutamate + ATP = N-acetyl-L-glutamyl 5-phosphate + ADP. It functions in the pathway amino-acid biosynthesis; L-arginine biosynthesis; N(2)-acetyl-L-ornithine from L-glutamate: step 2/4. Functionally, catalyzes the ATP-dependent phosphorylation of N-acetyl-L-glutamate. This chain is Acetylglutamate kinase, found in Shigella sonnei (strain Ss046).